Reading from the N-terminus, the 437-residue chain is GTPase Obg (437 aa).

Residues 2 to 160 (SMFLDTAKIS…RQLELELKIL (159 aa)) form the Obg domain. The OBG-type G domain occupies 161–338 (ADVGLVGFPS…LLEATAELLA (178 aa)). Residues 167-174 (GFPSVGKS), 192-196 (FTTIV), 214-217 (DLPG), 284-287 (NKMD), and 319-321 (SSL) each bind GTP. Mg(2+) contacts are provided by Ser-174 and Thr-194. Residues 359–437 (GFAETEKDFE…IGKFEFEFVD (79 aa)) form the OCT domain.

This sequence belongs to the TRAFAC class OBG-HflX-like GTPase superfamily. OBG GTPase family. Monomer. Mg(2+) serves as cofactor.

It localises to the cytoplasm. Functionally, an essential GTPase which binds GTP, GDP and possibly (p)ppGpp with moderate affinity, with high nucleotide exchange rates and a fairly low GTP hydrolysis rate. Plays a role in control of the cell cycle, stress response, ribosome biogenesis and in those bacteria that undergo differentiation, in morphogenesis control. The sequence is that of GTPase Obg from Streptococcus pyogenes serotype M4 (strain MGAS10750).